A 480-amino-acid polypeptide reads, in one-letter code: Alpha,alpha-trehalose-phosphate synthase [UDP-forming] 2 (480 aa).

Tyr97 and Asp151 together coordinate D-glucose 6-phosphate. Arg288 and Lys293 together coordinate UDP. UDP-alpha-D-glucose contacts are provided by Arg288 and Lys293. Residue Arg326 participates in D-glucose 6-phosphate binding. Residue 387-395 coordinates UDP-alpha-D-glucose; it reads DGMNLVSFE. 391 to 395 contributes to the UDP binding site; the sequence is LVSFE.

The protein belongs to the glycosyltransferase 20 family.

The catalysed reaction is D-glucose 6-phosphate + UDP-alpha-D-glucose = alpha,alpha-trehalose 6-phosphate + UDP + H(+). Its pathway is carbohydrate biosynthesis. In terms of biological role, synthase catalytic subunit of the trehalose synthase complex that catalyzes the production of trehalose from glucose-6-phosphate and UDP-alpha-D-glucose in a two step process. The protein is Alpha,alpha-trehalose-phosphate synthase [UDP-forming] 2 of Aspergillus niger.